We begin with the raw amino-acid sequence, 197 residues long: Phosphoheptose isomerase (197 aa).

Residues 36 to 197 (LVHSLAQGGK…VDSLLLGVEE (162 aa)) enclose the SIS domain. Position 51–53 (51–53 (NGG)) interacts with substrate. The Zn(2+) site is built by H60 and E64. Residues E64, 93–94 (ND), 119–121 (STS), S124, and Q174 each bind substrate. Positions 174 and 182 each coordinate Zn(2+).

This sequence belongs to the SIS family. GmhA subfamily. In terms of assembly, homotetramer. Requires Zn(2+) as cofactor.

It is found in the cytoplasm. It catalyses the reaction 2 D-sedoheptulose 7-phosphate = D-glycero-alpha-D-manno-heptose 7-phosphate + D-glycero-beta-D-manno-heptose 7-phosphate. The protein operates within carbohydrate biosynthesis; D-glycero-D-manno-heptose 7-phosphate biosynthesis; D-glycero-alpha-D-manno-heptose 7-phosphate and D-glycero-beta-D-manno-heptose 7-phosphate from sedoheptulose 7-phosphate: step 1/1. Functionally, catalyzes the isomerization of sedoheptulose 7-phosphate in D-glycero-D-manno-heptose 7-phosphate. This is Phosphoheptose isomerase from Thiobacillus denitrificans (strain ATCC 25259 / T1).